A 502-amino-acid chain; its full sequence is Solute carrier family 2, facilitated glucose transporter member 5 (502 aa).

M1 is modified (N-acetylmethionine). The Cytoplasmic portion of the chain corresponds to 1-17; sequence MEKEDQEKTGKLTLVLA. Residues 18 to 38 form a helical membrane-spanning segment; it reads LATFLAAFGSSFQYGYNVAAV. Y31 contributes to the D-fructose binding site. The Extracellular segment spans residues 39-67; it reads NSPSEFMQQFYNDTYYDRNKENIESFTLT. Residue N50 is glycosylated (N-linked (GlcNAc...) asparagine). A helical membrane pass occupies residues 68–90; the sequence is LLWSLTVSMFPFGGFIGSLMVGF. The Cytoplasmic portion of the chain corresponds to 91–97; sequence LVNNLGR. The helical transmembrane segment at 98-118 threads the bilayer; that stretch reads KGALLFNNIFSILPAILMGCS. Over 119 to 125 the chain is Extracellular; that stretch reads KIAKSFE. The helical transmembrane segment at 126-148 threads the bilayer; that stretch reads IIIASRLLVGICAGISSNVVPMY. Over 149–160 the chain is Cytoplasmic; sequence LGELAPKNLRGA. Residues 161-181 form a helical membrane-spanning segment; it reads LGVVPQLFITVGILVAQLFGL. Q166 is a binding site for D-fructose. Topologically, residues 182 to 191 are extracellular; it reads RSVLASEEGW. Residues 192-212 form a helical membrane-spanning segment; the sequence is PILLGLTGVPAGLQLLLLPFF. Residues 213–276 are Cytoplasmic-facing; that stretch reads PESPRYLLIQ…LFRMQSLRWQ (64 aa). The helical transmembrane segment at 277-297 threads the bilayer; that stretch reads LISTIVLMAGQQLSGVNAIYY. Residues Q287 and 295–297 each bind D-fructose; that span reads IYY. Residues 298–312 lie on the Extracellular side of the membrane; the sequence is YADQIYLSAGVKSND. A helical transmembrane segment spans residues 313 to 333; sequence VQYVTAGTGAVNVFMTMVTVF. At 334-341 the chain is on the cytoplasmic side; the sequence is VVELWGRR. Residues 342-362 form a helical membrane-spanning segment; sequence NLLLIGFSTCLTACIVLTVAL. Residues 363–370 lie on the Extracellular side of the membrane; the sequence is ALQNTISW. Residues 371-393 form a helical membrane-spanning segment; it reads MPYVSIVCVIVYVIGHAVGPSPI. Residue H386 coordinates D-fructose. Topologically, residues 394 to 411 are cytoplasmic; it reads PALFITEIFLQSSRPSAY. Residues 412 to 432 form a helical membrane-spanning segment; it reads MIGGSVHWLSNFIVGLIFPFI. A D-fructose-binding site is contributed by 418 to 419; the sequence is HW. The Extracellular portion of the chain corresponds to 433–438; the sequence is QVGLGP. The helical transmembrane segment at 439–459 threads the bilayer; that stretch reads YSFIIFAIICLLTTIYIFMVV. Over 460–502 the chain is Cytoplasmic; that stretch reads PETKGRTFVEINQIFAKKNKVSDVYPEKEEKELNDLPPATREQ.

The protein belongs to the major facilitator superfamily. Sugar transporter (TC 2.A.1.1) family. Glucose transporter subfamily. As to expression, detected in jejunum. Detected in kidney, skeletal muscle, brain and adipose tissue (at protein level). Detected in small intestine and in kidney, and at much lower levels in brain. Detected in enterocytes in duodenum, jejunum, and ileum.

The protein localises to the apical cell membrane. It is found in the cell membrane. It localises to the sarcolemma. It catalyses the reaction D-fructose(out) = D-fructose(in). With respect to regulation, fructose uptake is inhibited by mercury ions. Fructose uptake is only slightly inhibited by cytochalasin B. In terms of biological role, functions as a fructose transporter that has only low activity with other monosaccharides. Can mediate the uptake of deoxyglucose, but with low efficiency. Essential for fructose uptake in the small intestine. Plays a role in the regulation of salt uptake and blood pressure in response to dietary fructose. Required for the development of high blood pressure in response to high dietary fructose intake. In Rattus norvegicus (Rat), this protein is Solute carrier family 2, facilitated glucose transporter member 5.